A 506-amino-acid chain; its full sequence is Maturase K (506 aa).

It belongs to the intron maturase 2 family. MatK subfamily.

It localises to the plastid. The protein resides in the chloroplast. Its function is as follows. Usually encoded in the trnK tRNA gene intron. Probably assists in splicing its own and other chloroplast group II introns. This chain is Maturase K, found in Trifolium beckwithii (Beckwith's clover).